A 945-amino-acid chain; its full sequence is Cysteine-rich, acidic integral membrane protein (945 aa).

A disordered region spans residues 1–20; it reads MGNEAGPIFEESNAEVGTPP. The signal sequence occupies residues 1–23; sequence MGNEAGPIFEESNAEVGTPPADA. Over 24-882 the chain is Extracellular; the sequence is VHDDFFFDYK…GKGSSVSAGL (859 aa). 2 N-linked (GlcNAc...) asparagine glycosylation sites follow: Asn34 and Asn43. 66 repeat units span residues 40–51, 52–63, 64–75, 76–87, 88–99, 100–111, 112–123, 124–135, 136–147, 148–159, 160–171, 172–183, 184–195, 196–207, 208–219, 220–231, 232–243, 244–255, 256–267, 268–279, 280–291, 292–303, 304–315, 316–327, 328–339, 340–351, 352–363, 364–375, 376–387, 388–399, 400–411, 412–423, 424–435, 436–447, 448–459, 460–471, 472–483, 484–495, 496–507, 508–519, 520–531, 532–543, 544–555, 556–567, 568–579, 580–591, 592–603, 604–615, 616–627, 628–639, 640–651, 652–663, 664–675, 676–687, 688–699, 700–711, 712–723, 724–735, 736–747, 748–759, 760–771, 772–783, 784–795, 796–807, 808–819, and 820–831. Residues 40–831 are 66 X 12 AA tandem repeats of D-D-C-[ND]-I-T-G-D-G-N-E-T; it reads DDCNITGDCN…CNITGDCNET (792 aa). 4 N-linked (GlcNAc...) asparagine glycosylation sites follow: Asn67, Asn79, Asn91, and Asn103. N-linked (GlcNAc...) asparagine glycans are attached at residues Asn127, Asn139, and Asn151. The N-linked (GlcNAc...) asparagine glycan is linked to Asn175. N-linked (GlcNAc...) asparagine glycosylation is found at Asn199, Asn211, Asn223, Asn235, Asn247, and Asn259. Residues Asn283, Asn295, Asn307, Asn319, Asn331, and Asn343 are each glycosylated (N-linked (GlcNAc...) asparagine). N-linked (GlcNAc...) asparagine glycosylation is found at Asn367, Asn379, Asn391, Asn403, and Asn415. Asn439 carries N-linked (GlcNAc...) asparagine glycosylation. N-linked (GlcNAc...) asparagine glycans are attached at residues Asn463, Asn475, Asn487, Asn499, Asn511, and Asn523. N-linked (GlcNAc...) asparagine glycosylation is found at Asn547, Asn559, Asn571, Asn583, and Asn595. N-linked (GlcNAc...) asparagine glycosylation occurs at Asn619. Residues Asn643, Asn655, Asn667, Asn679, Asn691, and Asn703 are each glycosylated (N-linked (GlcNAc...) asparagine). Residues Asn727, Asn739, Asn751, Asn763, and Asn775 are each glycosylated (N-linked (GlcNAc...) asparagine). N-linked (GlcNAc...) asparagine glycosylation is present at Asn799. Asn823 carries an N-linked (GlcNAc...) asparagine glycan. The chain crosses the membrane as a helical span at residues 883-903; it reads LLLAGSTFLVLAVGLSAVLFL. Over 904 to 945 the chain is Cytoplasmic; that stretch reads GRERQNAVVICDNEVMMEEVPGCLSDASFAVPVTQSSDEARP.

The protein localises to the flagellar pocket. Its subcellular location is the cell membrane. In terms of biological role, supposed to function as cell surface receptor. Possibly involved in receptor-mediated endocytosis. The chain is Cysteine-rich, acidic integral membrane protein (CRAM) from Trypanosoma brucei brucei.